A 437-amino-acid chain; its full sequence is uncharacterized protein (437 aa).

2 consecutive transmembrane segments (helical) span residues Gly102–Ile122 and Ile272–Trp292.

It belongs to the herpesviridae UL49 family.

The protein resides in the host membrane. This is an uncharacterized protein from Connochaetes taurinus (Blue wildebeest).